Consider the following 577-residue polypeptide: MAGLTVRDPAVDRSLRSVFVGNIPYEATEEQLKDIFSEVGPVVSFRLVYDRETGKPKGYGFCEYQDQETALSAMRNLNGREFSGRALRVDNAASEKNKEELKSLGTGAPVIESPYGETISPEDAPESISKAVASLPPEQMFELMKQMKLCVQNSPQEARNMLLQNPQLAYALLQAQVVMRIVDPEIALKILHRQTNIPTLIAGNPQPVHGAGPGSGSNVSMNQQNPQAPQAQSLGGMHVNGAPPLMQASMQGGVPAPGQMPAAVTGPGPGSLAPGGGMQAQVGMPGSGPVSMERGQVPMQDPRAAMQRGSLPANVPTPRGLLGDAPNDPRGGTLLSVTGEVEPRGYLGPPHQGPPMHHVPGHESRGPPPHELRGGPLPEPRPLMAEPRGPMLDQRGPPLDGRGGRDPRGIDARGMEARAMEARGLDARGLEARAMEARAMEARAMEARAMEARAMEVRGMEARGMDTRGPVPGPRGPIPSGMQGPSPINMGAVVPQGSRQVPVMQGTGMQGASIQGGSQPGGFSPGQNQVTPQDHEKAALIMQVLQLTADQIAMLPPEQRQSILILKEQIQKSTGAP.

Serine 14 bears the Phosphoserine mark. The RRM domain occupies 16–94 (RSVFVGNIPY…RALRVDNAAS (79 aa)). Residues 108–248 (APVIESPYGE…VNGAPPLMQA (141 aa)) form an interactions with CSTF3 and SYMPK region. A Glycyl lysine isopeptide (Lys-Gly) (interchain with G-Cter in SUMO2) cross-link involves residue lysine 189. The disordered stretch occupies residues 206 to 243 (QPVHGAGPGSGSNVSMNQQNPQAPQAQSLGGMHVNGAP). Over residues 222–232 (NQQNPQAPQAQ) the composition is skewed to low complexity. At arginine 308 the chain carries Omega-N-methylarginine. Positions 340–409 (EVEPRGYLGP…DGRGGRDPRG (70 aa)) are disordered. The span at 360–373 (PGHESRGPPPHELR) shows a compositional bias: basic and acidic residues. One copy of the 1; approximate repeat lies at 410–414 (IDARG). The segment at 410–469 (IDARGMEARAMEARGLDARGLEARAMEARAMEARAMEARAMEARAMEVRGMEARGMDTRG) is 12 X 5 AA tandem repeats of M-E-A-R-[AG]. Repeat copies occupy residues 415–419 (MEARA) and 420–424 (MEARG). The stretch at 425-429 (LDARG) is one 4; approximate repeat. Residues 430–434 (LEARA) form a 5; approximate repeat. 4 consecutive repeat copies span residues 435-439 (MEARA), 440-444 (MEARA), 445-449 (MEARA), and 450-454 (MEARA). The 10; approximate repeat unit spans residues 455–459 (MEVRG). Residues 460–464 (MEARG) form repeat 11. Residues 465–469 (MDTRG) form a 12; approximate repeat. Omega-N-methylarginine is present on residues arginine 468 and arginine 475. Residues 508–532 (GMQGASIQGGSQPGGFSPGQNQVTP) are disordered. Residues 514–577 (IQGGSQPGGF…EQIQKSTGAP (64 aa)) are interaction with RPO2TC1. A phosphoserine mark is found at serine 518 and serine 524.

As to quaternary structure, the CSTF complex is composed of CSTF1 (50 kDa subunit), CSTF2 (64 kDa subunit) and CSTF3 (77 kDa subunit). CSTF2 directly interacts with CSTF3, SYMPK and RPO2TC1. Interacts with HSF1 in heat-stressed cells. Interacts with CPSF2, CPSF3 and FIP1L1. Interacts with DDX1.

The protein resides in the nucleus. Its function is as follows. One of the multiple factors required for polyadenylation and 3'-end cleavage of mammalian pre-mRNAs. This subunit is directly involved in the binding to pre-mRNAs. The chain is Cleavage stimulation factor subunit 2 (CSTF2) from Homo sapiens (Human).